Here is a 144-residue protein sequence, read N- to C-terminus: Austinoid biosynthesis clusters protein S (144 aa).

The protein belongs to the trt14 isomerase family. In terms of assembly, homodimer.

It participates in secondary metabolite biosynthesis; terpenoid biosynthesis. Its function is as follows. Part of the gene cluster B that mediates the biosynthesis of the fungal meroterpenoid acetoxydehydroaustin. The first step of the pathway is the synthesis of 3,5-dimethylorsellinic acid by the polyketide synthase ausA. 3,5-dimethylorsellinic acid is then prenylated by the polyprenyl transferase ausN. Further epoxidation by the FAD-dependent monooxygenase ausM and cyclization by the probable terpene cyclase ausL lead to the formation of protoaustinoid A. Protoaustinoid A is then oxidized to spiro-lactone preaustinoid A3 by the combined action of the FAD-binding monooxygenases ausB and ausC, and the dioxygenase ausE. Acid-catalyzed keto-rearrangement and ring contraction of the tetraketide portion of preaustinoid A3 by ausJ lead to the formation of preaustinoid A4. The aldo-keto reductase ausK, with the help of ausH, is involved in the next step by transforming preaustinoid A4 into isoaustinone which is in turn hydroxylated by the P450 monooxygenase ausI to form austinolide. The cytochrome P450 monooxygenase ausG then modifies austinolide to austinol. Austinol is further acetylated to austin by the O-acetyltransferase ausP, which spontaneously changes to dehydroaustin. The cytochrome P450 monooxygenase then converts dehydroaustin is into 7-dehydrodehydroaustin. The hydroxylation catalyzed by ausR permits the second O-acetyltransferase ausQ to add an additional acetyl group to the molecule, leading to the formation of acetoxydehydroaustin. Due to genetic rearrangements of the clusters and the subsequent loss of some enzymes, the end product of the Penicillium brasilianum austinoid biosynthesis clusters is acetoxydehydroaustin. AusS is necessary for austinoids production and may play a possible function as a regulator. The protein is Austinoid biosynthesis clusters protein S of Penicillium brasilianum.